The following is a 139-amino-acid chain: MENKIIYFLCTGNSCRSQMAEGWAKQYLGDEWKVYSAGIEAHGLNPNAVKAMKEVGIDISNQTSDIIDSDILNNADLVVTLCGDAADKCPMTPPHVKREHWGFDDPARAQGTEEEKWAFFQRVRDEIGNRLKEFAETGK.

Catalysis depends on nucleophile residues C10, C82, and C89. 2 cysteine pairs are disulfide-bonded: C10/C82 and C82/C89.

The protein belongs to the low molecular weight phosphotyrosine protein phosphatase family. Thioredoxin-coupled ArsC subfamily. In terms of assembly, monomer.

It localises to the cytoplasm. The enzyme catalyses arsenate + [thioredoxin]-dithiol + H(+) = arsenite + [thioredoxin]-disulfide + H2O. Its activity is regulated as follows. Activity is potassium and sulfate-independent. Functionally, catalyzes the reduction of arsenate [As(V)] to arsenite [As(III)]. In vitro, can dephosphorylate para-nitrophenyl phosphate (pNPP). In Bacillus subtilis (strain 168), this protein is Arsenate reductase.